Here is a 312-residue protein sequence, read N- to C-terminus: Beta-ketoacyl-[acyl-carrier-protein] synthase III (312 aa).

Residues C112 and H237 contribute to the active site. Residues 238-242 form an ACP-binding region; that stretch reads QANIR. N267 is a catalytic residue.

This sequence belongs to the thiolase-like superfamily. FabH family. As to quaternary structure, homodimer.

The protein localises to the cytoplasm. The catalysed reaction is malonyl-[ACP] + acetyl-CoA + H(+) = 3-oxobutanoyl-[ACP] + CO2 + CoA. It functions in the pathway lipid metabolism; fatty acid biosynthesis. Its function is as follows. Catalyzes the condensation reaction of fatty acid synthesis by the addition to an acyl acceptor of two carbons from malonyl-ACP. Catalyzes the first condensation reaction which initiates fatty acid synthesis and may therefore play a role in governing the total rate of fatty acid production. Possesses both acetoacetyl-ACP synthase and acetyl transacylase activities. Its substrate specificity determines the biosynthesis of branched-chain and/or straight-chain of fatty acids. This is Beta-ketoacyl-[acyl-carrier-protein] synthase III from Listeria welshimeri serovar 6b (strain ATCC 35897 / DSM 20650 / CCUG 15529 / CIP 8149 / NCTC 11857 / SLCC 5334 / V8).